Consider the following 213-residue polypeptide: Glycerol-3-phosphate acyltransferase (213 aa).

The next 6 membrane-spanning stretches (helical) occupy residues 3 to 23 (IIIL…GLWI), 48 to 68 (ILGV…GTLA), 71 to 91 (LPLI…LAVI), 119 to 139 (PFFL…FSMI), 144 to 164 (VVAA…GFIL), and 165 to 185 (TSYD…IIFR).

Belongs to the PlsY family. Probably interacts with PlsX.

Its subcellular location is the cell membrane. It catalyses the reaction an acyl phosphate + sn-glycerol 3-phosphate = a 1-acyl-sn-glycero-3-phosphate + phosphate. The protein operates within lipid metabolism; phospholipid metabolism. Its function is as follows. Catalyzes the transfer of an acyl group from acyl-phosphate (acyl-PO(4)) to glycerol-3-phosphate (G3P) to form lysophosphatidic acid (LPA). This enzyme utilizes acyl-phosphate as fatty acyl donor, but not acyl-CoA or acyl-ACP. The polypeptide is Glycerol-3-phosphate acyltransferase (Lactococcus lactis subsp. cremoris (strain SK11)).